The following is a 358-amino-acid chain: tRNA N6-adenosine threonylcarbamoyltransferase (358 aa).

2 residues coordinate Fe cation: histidine 111 and histidine 115. Residues 146–150, aspartate 179, glycine 192, and asparagine 294 contribute to the substrate site; that span reads LVSGG. Aspartate 322 is a Fe cation binding site.

It belongs to the KAE1 / TsaD family. Fe(2+) serves as cofactor.

It localises to the cytoplasm. The catalysed reaction is L-threonylcarbamoyladenylate + adenosine(37) in tRNA = N(6)-L-threonylcarbamoyladenosine(37) in tRNA + AMP + H(+). Functionally, required for the formation of a threonylcarbamoyl group on adenosine at position 37 (t(6)A37) in tRNAs that read codons beginning with adenine. Is involved in the transfer of the threonylcarbamoyl moiety of threonylcarbamoyl-AMP (TC-AMP) to the N6 group of A37, together with TsaE and TsaB. TsaD likely plays a direct catalytic role in this reaction. The chain is tRNA N6-adenosine threonylcarbamoyltransferase from Helicobacter hepaticus (strain ATCC 51449 / 3B1).